Reading from the N-terminus, the 337-residue chain is Cytoskeleton protein RodZ (337 aa).

The Cytoplasmic portion of the chain corresponds to 1 to 111 (MNTEATHDQN…LGKRRKKRDG (111 aa)). The HTH cro/C1-type domain occupies 19 to 71 (LRNAREQLGLSQQAVAERLCLKVSTVRDIEEDKAPADLASTFLRGYIRSYARL). The segment at residues 30–49 (QQAVAERLCLKVSTVRDIEE) is a DNA-binding region (H-T-H motif). Residues 112–132 (WLMTFTWLVLFVVVGLTGAWW) traverse the membrane as a helical; Signal-anchor for type II membrane protein segment. Residues 133-337 (WQNHKAQQEE…TLNAEQSPAQ (205 aa)) lie on the Periplasmic side of the membrane. Positions 155 to 220 (NAGGDSAQSV…QNAVVAPSQA (66 aa)) are disordered. Polar residues predominate over residues 160-192 (SAQSVPLDTSEAASQDSTPAPTAPVDSTATNAV). A compositionally biased stretch (low complexity) spans 193-217 (PQTPDASATTTAPAADAQQNAVVAP).

Belongs to the RodZ family.

The protein resides in the cell inner membrane. In terms of biological role, cytoskeletal protein that is involved in cell-shape control through regulation of the length of the long axis. This Citrobacter koseri (strain ATCC BAA-895 / CDC 4225-83 / SGSC4696) protein is Cytoskeleton protein RodZ.